The chain runs to 183 residues: Holliday junction branch migration complex subunit RuvA (183 aa).

Positions Met1–Leu63 are domain I. Residues Glu64 to Asn141 form a domain II region. Residue Asn141 is a region of interest, flexible linker. The interval Asn141 to Ser183 is domain III.

It belongs to the RuvA family. Homotetramer. Forms an RuvA(8)-RuvB(12)-Holliday junction (HJ) complex. HJ DNA is sandwiched between 2 RuvA tetramers; dsDNA enters through RuvA and exits via RuvB. An RuvB hexamer assembles on each DNA strand where it exits the tetramer. Each RuvB hexamer is contacted by two RuvA subunits (via domain III) on 2 adjacent RuvB subunits; this complex drives branch migration. In the full resolvosome a probable DNA-RuvA(4)-RuvB(12)-RuvC(2) complex forms which resolves the HJ.

Its subcellular location is the cytoplasm. Functionally, the RuvA-RuvB-RuvC complex processes Holliday junction (HJ) DNA during genetic recombination and DNA repair, while the RuvA-RuvB complex plays an important role in the rescue of blocked DNA replication forks via replication fork reversal (RFR). RuvA specifically binds to HJ cruciform DNA, conferring on it an open structure. The RuvB hexamer acts as an ATP-dependent pump, pulling dsDNA into and through the RuvAB complex. HJ branch migration allows RuvC to scan DNA until it finds its consensus sequence, where it cleaves and resolves the cruciform DNA. The protein is Holliday junction branch migration complex subunit RuvA of Helicobacter acinonychis (strain Sheeba).